A 63-amino-acid polypeptide reads, in one-letter code: DEPTTDLPICEQAFGDAGLCFGYMKLYSYNQETKNCEEFIYGGCQGNDNRFSTLAECEQKCIN.

The BPTI/Kunitz inhibitor domain occupies 10–61; the sequence is CEQAFGDAGLCFGYMKLYSYNQETKNCEEFIYGGCQGNDNRFSTLAECEQKC. Cystine bridges form between Cys-10-Cys-61, Cys-20-Cys-44, and Cys-36-Cys-57.

In terms of biological role, inhibits chymotrypsin and thus avoids the accidental chymotrypsin-mediated activation of prophenoloxidase. This enzyme is required by the insect immune system to produce melanin which is used to engulf foreign objects. This is Chymotrypsin inhibitor SCI-III from Bombyx mori (Silk moth).